The following is a 126-amino-acid chain: Holo-[acyl-carrier-protein] synthase (126 aa).

D9 and E58 together coordinate Mg(2+).

Belongs to the P-Pant transferase superfamily. AcpS family. The cofactor is Mg(2+).

It localises to the cytoplasm. The catalysed reaction is apo-[ACP] + CoA = holo-[ACP] + adenosine 3',5'-bisphosphate + H(+). Functionally, transfers the 4'-phosphopantetheine moiety from coenzyme A to a Ser of acyl-carrier-protein. In Escherichia fergusonii (strain ATCC 35469 / DSM 13698 / CCUG 18766 / IAM 14443 / JCM 21226 / LMG 7866 / NBRC 102419 / NCTC 12128 / CDC 0568-73), this protein is Holo-[acyl-carrier-protein] synthase.